The following is a 93-amino-acid chain: Phosphoribosyl-ATP pyrophosphatase (93 aa).

It belongs to the PRA-PH family.

It localises to the cytoplasm. It catalyses the reaction 1-(5-phospho-beta-D-ribosyl)-ATP + H2O = 1-(5-phospho-beta-D-ribosyl)-5'-AMP + diphosphate + H(+). It participates in amino-acid biosynthesis; L-histidine biosynthesis; L-histidine from 5-phospho-alpha-D-ribose 1-diphosphate: step 2/9. The protein is Phosphoribosyl-ATP pyrophosphatase of Mycolicibacterium vanbaalenii (strain DSM 7251 / JCM 13017 / BCRC 16820 / KCTC 9966 / NRRL B-24157 / PYR-1) (Mycobacterium vanbaalenii).